Consider the following 82-residue polypeptide: uncharacterized protein (82 aa).

2 helical membrane passes run 8-28 and 50-70; these read LLSAAGILLLALLSCLLLPAP and LYTVLFCLWFLALGAIEYLVL.

It localises to the cell membrane. This is an uncharacterized protein from Klebsiella pneumoniae.